A 137-amino-acid chain; its full sequence is Putative pre-16S rRNA nuclease (137 aa).

It belongs to the YqgF nuclease family.

It is found in the cytoplasm. Its function is as follows. Could be a nuclease involved in processing of the 5'-end of pre-16S rRNA. This is Putative pre-16S rRNA nuclease from Bacillus cereus (strain 03BB102).